Consider the following 312-residue polypeptide: Ribonuclease Z (312 aa).

The Zn(2+) site is built by His-62, His-64, Asp-66, His-67, His-144, Asp-215, and His-273. Asp-66 serves as the catalytic Proton acceptor.

This sequence belongs to the RNase Z family. Homodimer. It depends on Zn(2+) as a cofactor.

The catalysed reaction is Endonucleolytic cleavage of RNA, removing extra 3' nucleotides from tRNA precursor, generating 3' termini of tRNAs. A 3'-hydroxy group is left at the tRNA terminus and a 5'-phosphoryl group is left at the trailer molecule.. Functionally, zinc phosphodiesterase, which displays some tRNA 3'-processing endonuclease activity. Probably involved in tRNA maturation, by removing a 3'-trailer from precursor tRNA. In Prochlorococcus marinus subsp. pastoris (strain CCMP1986 / NIES-2087 / MED4), this protein is Ribonuclease Z.